Consider the following 284-residue polypeptide: Tropomyosin beta chain (284 aa).

Residue methionine 1 is modified to N-acetylmethionine. A disordered region spans residues 1–78; it reads MDAIKKKMQM…EKLEQAEKKA (78 aa). Positions 1 to 284 form a coiled coil; that stretch reads MDAIKKKMQM…DNALNDITSL (284 aa). Composition is skewed to basic and acidic residues over residues 12–40 and 51–78; these read KLDK…KQLE and KGTE…EKKA. Threonine 53 is subject to Phosphothreonine. At serine 61 the chain carries Phosphoserine; by PIK3CG. Threonine 79 carries the phosphothreonine modification. Residue serine 87 is modified to Phosphoserine. Threonine 108 bears the Phosphothreonine mark. The interval 117 to 136 is disordered; the sequence is EKAADESERGMKVIENRAMK. A phosphoserine mark is found at serine 158, serine 206, and serine 215. Threonine 252 is subject to Phosphothreonine. Tyrosine 261 carries the post-translational modification Phosphotyrosine. A Phosphoserine modification is found at serine 271. Threonine 282 bears the Phosphothreonine mark. Serine 283 carries the phosphoserine modification.

Belongs to the tropomyosin family. As to quaternary structure, homodimer. Heterodimer of an alpha (TPM1, TPM3 or TPM4) and a beta (TPM2) chain. Phosphorylated on Ser-61 by PIK3CG. Phosphorylation on Ser-61 is required for ADRB2 internalization.

The protein resides in the cytoplasm. The protein localises to the cytoskeleton. Functionally, binds to actin filaments in muscle and non-muscle cells. Plays a central role, in association with the troponin complex, in the calcium dependent regulation of vertebrate striated muscle contraction. Smooth muscle contraction is regulated by interaction with caldesmon. In non-muscle cells is implicated in stabilizing cytoskeleton actin filaments. The non-muscle isoform may have a role in agonist-mediated receptor internalization. The polypeptide is Tropomyosin beta chain (Tpm2) (Mus musculus (Mouse)).